The sequence spans 299 residues: Non-structural protein V (299 aa).

Over residues 137 to 160 (DGVEVWGGDEESENSDVDSGEPDP) the composition is skewed to acidic residues. 2 disordered regions span residues 137 to 186 (DGVE…ETVE) and 205 to 229 (KAGK…KPIK). Residues His232, Cys251, Cys255, Cys267, Cys269, Cys272, Cys276, and Cys279 each coordinate Zn(2+).

It belongs to the paramyxoviruses V protein family. Interacts with host IFIH1/MDA5 and DHX58/LGP2. Interacts with host TYK2; this interaction inhibits the type I interferon signaling pathway.

It is found in the host cytoplasm. Functionally, plays an essential role in the inhibition of host immune response. Prevents the establishment of cellular antiviral state by blocking interferon-alpha/beta (IFN-alpha/beta) production and signaling pathway. Interacts with host IFIH1/MDA5 and DHX58/LGP2 to inhibit the transduction pathway involved in the activation of IFN-beta promoter, thus protecting the virus against cell antiviral state. Blocks the type I interferon signaling pathway by interacting with host TYK2 and thereby inhibiting downstream STAT1 and STAT2 phosphorylation. The sequence is that of Non-structural protein V (P/V) from Rinderpest virus (strain Kabete O) (RDV).